The following is a 190-amino-acid chain: Molybdenum cofactor guanylyltransferase (190 aa).

Residues 8-10 (LAG), Lys20, Asp64, and Asp98 contribute to the GTP site. Asp98 is a binding site for Mg(2+).

The protein belongs to the MobA family. In terms of assembly, monomer. Requires Mg(2+) as cofactor.

The protein resides in the cytoplasm. The catalysed reaction is Mo-molybdopterin + GTP + H(+) = Mo-molybdopterin guanine dinucleotide + diphosphate. Its function is as follows. Transfers a GMP moiety from GTP to Mo-molybdopterin (Mo-MPT) cofactor (Moco or molybdenum cofactor) to form Mo-molybdopterin guanine dinucleotide (Mo-MGD) cofactor. This is Molybdenum cofactor guanylyltransferase from Rhodobacter capsulatus (Rhodopseudomonas capsulata).